We begin with the raw amino-acid sequence, 268 residues long: Xyloglucan endotransglucosylase protein 7 (268 aa).

The GH16 domain maps to 1-196 (MNAEGGNLHR…WTKAPFTASY (196 aa)). Glutamate 82 (nucleophile) is an active-site residue. Glutamate 86 functions as the Proton donor in the catalytic mechanism. Glutamate 86 serves as a coordination point for xyloglucan. Residue asparagine 90 is glycosylated (N-linked (GlcNAc...) asparagine). Xyloglucan-binding positions include 99–101 (HTN), 109–111 (NRE), 175–176 (DW), and glycine 180. 2 disulfide bridges follow: cysteine 204–cysteine 213 and cysteine 251–cysteine 265. Arginine 256 is a xyloglucan binding site.

It belongs to the glycosyl hydrolase 16 family. XTH group 2 subfamily. Contains at least one intrachain disulfide bond essential for its enzymatic activity. In terms of tissue distribution, expressed at a very high level in flowers and stems (picked at anthesis), and at a lower level in ripe leaves and fruits.

The protein resides in the cytoplasm. The catalysed reaction is breaks a beta-(1-&gt;4) bond in the backbone of a xyloglucan and transfers the xyloglucanyl segment on to O-4 of the non-reducing terminal glucose residue of an acceptor, which can be a xyloglucan or an oligosaccharide of xyloglucan.. Its function is as follows. Catalyzes xyloglucan endotransglycosylation (XET). Cleaves and religates xyloglucan polymers. Does not catalyze xyloglucan endohydrolysis (XEH). Probably involved in cell wall assembly and synthesis in fast growing tissues and in the maintenance of firmness in mature fruits. The protein is Xyloglucan endotransglucosylase protein 7 of Diospyros kaki (Kaki persimmon).